A 166-amino-acid chain; its full sequence is Large ribosomal subunit protein uL10 (166 aa).

The protein belongs to the universal ribosomal protein uL10 family. Part of the ribosomal stalk of the 50S ribosomal subunit. The N-terminus interacts with L11 and the large rRNA to form the base of the stalk. The C-terminus forms an elongated spine to which L12 dimers bind in a sequential fashion forming a multimeric L10(L12)X complex.

Functionally, forms part of the ribosomal stalk, playing a central role in the interaction of the ribosome with GTP-bound translation factors. This is Large ribosomal subunit protein uL10 from Aeromonas hydrophila subsp. hydrophila (strain ATCC 7966 / DSM 30187 / BCRC 13018 / CCUG 14551 / JCM 1027 / KCTC 2358 / NCIMB 9240 / NCTC 8049).